Consider the following 722-residue polypeptide: Ras and EF-hand domain-containing protein (722 aa).

2 consecutive EF-hand domains span residues 5 to 39 and 39 to 74; these read DELS…ELKV and VSPS…ARGL. Positions 75 to 84 are enriched in basic and acidic residues; the sequence is HMPEGKKDVE. The segment at 75 to 109 is disordered; that stretch reads HMPEGKKDVEQGEPPKSPSTPDKEEKPEETSSPAW. A coiled-coil region spans residues 156–335; that stretch reads REIRLQSTEM…ANRKLHDSND (180 aa). Residues 355–374 show a composition bias toward polar residues; it reads INTSPGSTISRNSPKLTRCT. 2 disordered regions span residues 355–384 and 439–491; these read INTS…PRSS and FHRS…SGAS. A compositionally biased stretch (low complexity) spans 480 to 491; it reads SNPVSRSSSGAS. GTP-binding positions include 532 to 537, 635 to 638, and 672 to 673; these read AVGKSS, NKAD, and AK.

This sequence belongs to the small GTPase superfamily. Rab family. As to quaternary structure, homodimer.

The protein localises to the cytoplasm. The protein resides in the perinuclear region. In terms of biological role, binds predominantly GDP, and also GTP. The polypeptide is Ras and EF-hand domain-containing protein (rasef) (Xenopus tropicalis (Western clawed frog)).